An 815-amino-acid polypeptide reads, in one-letter code: Leucine--tRNA ligase (815 aa).

The 'HIGH' region signature appears at 41–51 (PYPSGTLHVGH). Positions 576-580 (KMSKS) match the 'KMSKS' region motif. K579 is a binding site for ATP.

This sequence belongs to the class-I aminoacyl-tRNA synthetase family.

The protein resides in the cytoplasm. It carries out the reaction tRNA(Leu) + L-leucine + ATP = L-leucyl-tRNA(Leu) + AMP + diphosphate. The protein is Leucine--tRNA ligase of Pseudothermotoga lettingae (strain ATCC BAA-301 / DSM 14385 / NBRC 107922 / TMO) (Thermotoga lettingae).